The following is a 387-amino-acid chain: Phosphoglycerate kinase (387 aa).

Residues 21-23 (DLN), Arg-36, 59-62 (HLGR), Arg-113, and Arg-146 each bind substrate. Residues Lys-197, Glu-314, and 340–343 (GGDT) each bind ATP.

It belongs to the phosphoglycerate kinase family. In terms of assembly, monomer.

It localises to the cytoplasm. The enzyme catalyses (2R)-3-phosphoglycerate + ATP = (2R)-3-phospho-glyceroyl phosphate + ADP. The protein operates within carbohydrate degradation; glycolysis; pyruvate from D-glyceraldehyde 3-phosphate: step 2/5. This chain is Phosphoglycerate kinase, found in Pseudomonas syringae pv. tomato (strain ATCC BAA-871 / DC3000).